Consider the following 204-residue polypeptide: Redox-sensing transcriptional repressor Rex 2 (204 aa).

Residues 17–53 constitute a DNA-binding region (H-T-H motif); it reads MYRKVLEATKKPYISSDEIARFLEINPDLVRKDFSYL.

The protein belongs to the transcriptional regulatory Rex family. As to quaternary structure, homodimer.

It localises to the cytoplasm. Its function is as follows. Modulates transcription in response to changes in cellular NADH/NAD(+) redox state. This is Redox-sensing transcriptional repressor Rex 2 (rex2) from Thermotoga maritima (strain ATCC 43589 / DSM 3109 / JCM 10099 / NBRC 100826 / MSB8).